We begin with the raw amino-acid sequence, 801 residues long: Endonuclease MutS2 (801 aa).

336–343 (GPNTGGKT) contributes to the ATP binding site. Residues 696 to 721 (AQQSKAKQKQQKIVKTKTASGSARAT) form a disordered region. Basic residues predominate over residues 701-710 (AKQKQQKIVK). The Smr domain maps to 726–801 (LDLRGVRYEA…GDGATIAELS (76 aa)).

It belongs to the DNA mismatch repair MutS family. MutS2 subfamily. Homodimer. Binds to stalled ribosomes, contacting rRNA.

Functionally, endonuclease that is involved in the suppression of homologous recombination and thus may have a key role in the control of bacterial genetic diversity. In terms of biological role, acts as a ribosome collision sensor, splitting the ribosome into its 2 subunits. Detects stalled/collided 70S ribosomes which it binds and splits by an ATP-hydrolysis driven conformational change. Acts upstream of the ribosome quality control system (RQC), a ribosome-associated complex that mediates the extraction of incompletely synthesized nascent chains from stalled ribosomes and their subsequent degradation. Probably generates substrates for RQC. In Leuconostoc citreum (strain KM20), this protein is Endonuclease MutS2.